Consider the following 388-residue polypeptide: 1-deoxy-D-xylulose 5-phosphate reductoisomerase (388 aa).

Residues T15, G16, S17, I18, and N127 each contribute to the NADPH site. K128 contributes to the 1-deoxy-D-xylulose 5-phosphate binding site. E129 provides a ligand contact to NADPH. D153 serves as a coordination point for Mn(2+). S154, E155, S179, and H202 together coordinate 1-deoxy-D-xylulose 5-phosphate. E155 provides a ligand contact to Mn(2+). Position 208 (G208) interacts with NADPH. 1-deoxy-D-xylulose 5-phosphate contacts are provided by S215, N220, K221, and E224. A Mn(2+)-binding site is contributed by E224.

It belongs to the DXR family. Mg(2+) is required as a cofactor. Mn(2+) serves as cofactor.

The enzyme catalyses 2-C-methyl-D-erythritol 4-phosphate + NADP(+) = 1-deoxy-D-xylulose 5-phosphate + NADPH + H(+). It functions in the pathway isoprenoid biosynthesis; isopentenyl diphosphate biosynthesis via DXP pathway; isopentenyl diphosphate from 1-deoxy-D-xylulose 5-phosphate: step 1/6. Its function is as follows. Catalyzes the NADPH-dependent rearrangement and reduction of 1-deoxy-D-xylulose-5-phosphate (DXP) to 2-C-methyl-D-erythritol 4-phosphate (MEP). This chain is 1-deoxy-D-xylulose 5-phosphate reductoisomerase, found in Bacteroides fragilis (strain ATCC 25285 / DSM 2151 / CCUG 4856 / JCM 11019 / LMG 10263 / NCTC 9343 / Onslow / VPI 2553 / EN-2).